A 392-amino-acid chain; its full sequence is GDSL esterase/lipase ESM1 (392 aa).

Positions 1 to 28 (MADNLNLVSVLGVLLVLTIFHNPIIVYA) are cleaved as a signal peptide. Catalysis depends on serine 43, which acts as the Nucleophile. N-linked (GlcNAc...) asparagine glycans are attached at residues asparagine 146, asparagine 166, and asparagine 290. Residues aspartate 324 and histidine 327 contribute to the active site.

The protein belongs to the 'GDSL' lipolytic enzyme family.

It is found in the secreted. Functionally, represses or inhibits nitriles production from methionine-derived and from indol-3-ylmethyl glucosinolates. Favors isothiocyanate production. This is GDSL esterase/lipase ESM1 (ESM1) from Arabidopsis thaliana (Mouse-ear cress).